The primary structure comprises 212 residues: Holliday junction branch migration complex subunit RuvA (212 aa).

Residues 1-70 (MISYLKGSPI…EDQQILYGFS (70 aa)) form a domain I region. Residues 71–149 (TTAERELFRQ…QWRKMVGVTV (79 aa)) are domain II. Residues 150–160 (TSSAAMPSLEI) are flexible linker. The segment at 160–212 (ILEDIEMTLLALGYTNEEINKAISTLSQDNLMLKNTNTEEWIKEAIAWLSQGT) is domain III.

The protein belongs to the RuvA family. In terms of assembly, homotetramer. Forms an RuvA(8)-RuvB(12)-Holliday junction (HJ) complex. HJ DNA is sandwiched between 2 RuvA tetramers; dsDNA enters through RuvA and exits via RuvB. An RuvB hexamer assembles on each DNA strand where it exits the tetramer. Each RuvB hexamer is contacted by two RuvA subunits (via domain III) on 2 adjacent RuvB subunits; this complex drives branch migration. In the full resolvosome a probable DNA-RuvA(4)-RuvB(12)-RuvC(2) complex forms which resolves the HJ.

Its subcellular location is the cytoplasm. In terms of biological role, the RuvA-RuvB-RuvC complex processes Holliday junction (HJ) DNA during genetic recombination and DNA repair, while the RuvA-RuvB complex plays an important role in the rescue of blocked DNA replication forks via replication fork reversal (RFR). RuvA specifically binds to HJ cruciform DNA, conferring on it an open structure. The RuvB hexamer acts as an ATP-dependent pump, pulling dsDNA into and through the RuvAB complex. HJ branch migration allows RuvC to scan DNA until it finds its consensus sequence, where it cleaves and resolves the cruciform DNA. This chain is Holliday junction branch migration complex subunit RuvA, found in Crocosphaera subtropica (strain ATCC 51142 / BH68) (Cyanothece sp. (strain ATCC 51142)).